The sequence spans 832 residues: FAST kinase domain-containing protein 1, mitochondrial (832 aa).

The RAP domain occupies 765–825 (VAIEFLDSKA…KDAWMDYLRK (61 aa)).

This sequence belongs to the FAST kinase family.

Its subcellular location is the mitochondrion. Functionally, may regulate the stability of some mitochondrial mRNA species. The chain is FAST kinase domain-containing protein 1, mitochondrial (fastkd1) from Xenopus laevis (African clawed frog).